A 398-amino-acid polypeptide reads, in one-letter code: Succinate--CoA ligase [ADP-forming] subunit beta (398 aa).

The ATP-grasp domain occupies 9-254 (KRLLHEYGAP…TSEEDPKEIE (246 aa)). Residues lysine 46, 53–55 (GRG), glutamate 109, alanine 112, and glutamate 117 each bind ATP. Asparagine 209 and aspartate 223 together coordinate Mg(2+). Substrate is bound by residues asparagine 274 and 331–333 (GIM).

It belongs to the succinate/malate CoA ligase beta subunit family. Heterotetramer of two alpha and two beta subunits. The cofactor is Mg(2+).

It catalyses the reaction succinate + ATP + CoA = succinyl-CoA + ADP + phosphate. It carries out the reaction GTP + succinate + CoA = succinyl-CoA + GDP + phosphate. The protein operates within carbohydrate metabolism; tricarboxylic acid cycle; succinate from succinyl-CoA (ligase route): step 1/1. Succinyl-CoA synthetase functions in the citric acid cycle (TCA), coupling the hydrolysis of succinyl-CoA to the synthesis of either ATP or GTP and thus represents the only step of substrate-level phosphorylation in the TCA. The beta subunit provides nucleotide specificity of the enzyme and binds the substrate succinate, while the binding sites for coenzyme A and phosphate are found in the alpha subunit. In Bartonella henselae (strain ATCC 49882 / DSM 28221 / CCUG 30454 / Houston 1) (Rochalimaea henselae), this protein is Succinate--CoA ligase [ADP-forming] subunit beta.